The sequence spans 308 residues: MANRRQPVQHRAQQRVYRQSQIRYAPGAGGESEISCCVKYSVFSFNVIFFLLGFGLLLFGVWAQIEKNTFVNMLSKASKLYLDPTWPLLIVGFLTFIIGFSGCVGSLRENTSFLTFYSTLLGLLLIAEFSAGVFAYACRDQLDNYIRNLLNDVVVGYRDDPDLQLLIDSMQETWMCCGINGADDWDRNTYFSIEAREVASPEAGGVPFSCCINSSKLEFKNYFCGHGVRLKPESHMAAHLAAQRVMAHTASIYTEGCLPKLQLWLNNNMLLVAVSMVIIAIIQVLGICFAQNLKSDILAQRAKWYYTH.

The Cytoplasmic segment spans residues 1–41; that stretch reads MANRRQPVQHRAQQRVYRQSQIRYAPGAGGESEISCCVKYS. A helical transmembrane segment spans residues 42 to 62; that stretch reads VFSFNVIFFLLGFGLLLFGVW. The Extracellular portion of the chain corresponds to 63–86; sequence AQIEKNTFVNMLSKASKLYLDPTW. The chain crosses the membrane as a helical span at residues 87 to 107; the sequence is PLLIVGFLTFIIGFSGCVGSL. Topologically, residues 108–112 are cytoplasmic; it reads RENTS. The chain crosses the membrane as a helical span at residues 113-133; it reads FLTFYSTLLGLLLIAEFSAGV. Over 134–268 the chain is Extracellular; it reads FAYACRDQLD…PKLQLWLNNN (135 aa). The N-linked (GlcNAc...) asparagine glycan is linked to Asn213. Residues 269–289 traverse the membrane as a helical segment; the sequence is MLLVAVSMVIIAIIQVLGICF. The Cytoplasmic portion of the chain corresponds to 290–308; it reads AQNLKSDILAQRAKWYYTH.

The protein belongs to the tetraspanin (TM4SF) family. As to quaternary structure, may interact with protease sup-17; the interaction promotes sup-17 cell membrane localization. As to expression, expressed in the germline.

Its subcellular location is the cell membrane. The protein resides in the cytoplasmic vesicle membrane. The protein localises to the endosome membrane. It is found in the early endosome membrane. It localises to the late endosome membrane. Its subcellular location is the recycling endosome membrane. The protein resides in the golgi apparatus. The protein localises to the trans-Golgi network membrane. Its function is as follows. Functions redundantly with tsp-14 isoform a to regulate body size, embryonic and vulva development. Functions redundantly with tsp-14 (isoforms a and b) to regulate cell fate specification in the postembryonic mesodermal M lineage and male development. May regulate BMP-like Sma/Mab signaling by mediating protease sup-17 trafficking to the cell surface. Together with tsp-14, functions redundantly to maintain cell surface levels of the BMP type II receptor daf-4 (but not BMP type I receptor sma-6), probably by regulating endosomal sorting of receptors and their targeting to degradative lysosomes. Together with tsp-14 involved in maintaining the structural and functional integrity of the endosomal network. Together with tsp-14, probably acts by modulating the activation of glp-1, a Notch-like receptor, to regulate germline maturation. Probably acts by modulating the activation of lin-12, a Notch-like receptor, to regulate cell fate specification such as the anchor cell/ventral uterine precursor cell decision. This is Tetraspanin-12 from Caenorhabditis elegans.